The chain runs to 178 residues: MSPSGRLCLLTIVGLILPTRGQTLKDTTSSSSADSTIMDIQVPTRAPDAVYTELQPTSPTPTWPADETPQPQTQTQQLEGTDGPLVTDPETHKSTKAAHPTDDTTTLSERPSPSTDVQTDPQTLKPSGFHEDDPFFYDEHTLRKRGLLVAAVLFITGIIILTSGKCRQLSRLCRNRCR.

Positions 1-21 are cleaved as a signal peptide; it reads MSPSGRLCLLTIVGLILPTRG. Residues 22–145 lie on the Extracellular side of the membrane; that stretch reads QTLKDTTSSS…FYDEHTLRKR (124 aa). Residues 23–131 are disordered; sequence TLKDTTSSSS…QTLKPSGFHE (109 aa). Low complexity-rich tracts occupy residues 26 to 36 and 68 to 77; these read DTTSSSSADST and TPQPQTQTQQ. The span at 103–125 shows a compositional bias: polar residues; it reads DTTTLSERPSPSTDVQTDPQTLK. Residues 146–164 traverse the membrane as a helical segment; sequence GLLVAAVLFITGIIILTSG. Over 165–178 the chain is Cytoplasmic; sequence KCRQLSRLCRNRCR.

The protein belongs to the FXYD family. As to quaternary structure, regulatory subunit of the sodium/potassium-transporting ATPase which is composed of a catalytic alpha subunit, a non-catalytic beta subunit and an additional regulatory subunit. The regulatory subunit, a member of the FXYD protein family, modulates the enzymatic activity in a tissue- and isoform-specific way by changing affinities of the Na+/K+-ATPase toward Na(+), K(+) or ATP. Glycosylated.

The protein resides in the cell membrane. The protein localises to the basolateral cell membrane. Functionally, associates with and regulates the activity of the sodium/potassium-transporting ATPase (NKA) which catalyzes the hydrolysis of ATP coupled with the exchange of Na(+) and K(+) ions across the plasma membrane. May increase NKA activity by increasing the apparent affinity for Na(+). Involved in down-regulation of E-cadherin which results in reduced cell adhesion. Promotes metastasis. The chain is FXYD domain-containing ion transport regulator 5 (FXYD5) from Homo sapiens (Human).